A 199-amino-acid polypeptide reads, in one-letter code: Probable GTP-binding protein EngB (199 aa).

An EngB-type G domain is found at 28–199 (DIPEIALAGR…QAWDAILEQI (172 aa)). GTP contacts are provided by residues 36–43 (GRSNVGKS), 63–67 (GKTQL), 81–84 (DVPG), 148–151 (TKAD), and 180–182 (FSS). Mg(2+) is bound by residues Ser43 and Thr65.

This sequence belongs to the TRAFAC class TrmE-Era-EngA-EngB-Septin-like GTPase superfamily. EngB GTPase family. The cofactor is Mg(2+).

Necessary for normal cell division and for the maintenance of normal septation. This is Probable GTP-binding protein EngB from Streptococcus uberis (strain ATCC BAA-854 / 0140J).